The following is a 154-amino-acid chain: Leghemoglobin-2 (154 aa).

The Globin domain occupies 3 to 151 (ALTESQAALV…LAIVIKKEMN (149 aa)). Heme b is bound at residue Ser46. At Ser46 the chain carries Phosphoserine. His64 contacts O2. Lys67, His98, and Lys101 together coordinate heme b. The residue at position 139 (Tyr139) is a Nitrated tyrosine.

This sequence belongs to the plant globin family. As to quaternary structure, monomer. Post-translationally, nitrated in effective nodules and particularly in hypoxic conditions; this mechanism may play a protective role in the symbiosis by buffering toxic peroxynitrite NO(2)(-). Nitration level decrease during nodule senescence. In terms of processing, phosphorylation at Ser-46 disrupts the molecular environment of its porphyrin ring oxygen binding pocket, thus leading to a reduced oxygen consumption and to the delivery of oxygen O(2) to symbiosomes. In terms of tissue distribution, root nodules.

It is found in the cytoplasm. Its subcellular location is the cytosol. The protein localises to the nucleus. Leghemoglobin that reversibly binds oxygen O(2) through a pentacoordinated heme iron. In root nodules, facilitates the diffusion of oxygen to the bacteroids while preventing the bacterial nitrogenase from being inactivated by buffering dioxygen, nitric oxide and carbon monoxide, and promoting the formation of reactive oxygen species (ROS, e.g. H(2)O(2)). This role is essential for symbiotic nitrogen fixation (SNF). The chain is Leghemoglobin-2 from Lupinus luteus (European yellow lupine).